Consider the following 323-residue polypeptide: Global nitrogen regulator NrpRI (323 aa).

Residues 11 to 76 (IEIMRVIHES…TLTDLGENEM (66 aa)) are winged helix-turn-helix. Positions 86–323 (GFVISRIEEM…MLDYQTMKEI (238 aa)) are NRD.

This sequence belongs to the NrpR family. Forms a complex with NrpRII and the general archaeal transcription factors TBP and TFB. Interacts directly with NrpRII.

Its activity is regulated as follows. Under nitrogen limitation, binding of 2-oxoglutarate to the NrpRI/NrpRII complex decreases the binding affinity of NrpRI to DNA as well as the binding affinity of NrpRII to TBP and TFB, which leads to removal of the complex from the operator, RNA polymerase recruitment and initiation of transcription. Plays a major role in nitrogen regulation. Under nitrogen sufficiency, binds to the nifH and the glnk1 promoters, leading to repression of the transcription of the genes. The polypeptide is Global nitrogen regulator NrpRI (Methanosarcina mazei (strain ATCC BAA-159 / DSM 3647 / Goe1 / Go1 / JCM 11833 / OCM 88) (Methanosarcina frisia)).